The primary structure comprises 665 residues: GTPase IMAP family member 8 (665 aa).

Positions 8-210 (MSELRLLLLG…HVNFKTEGSR (203 aa)) constitute an AIG1-type G 1 domain. The tract at residues 17-24 (GKCRSGKS) is G1. Residues 17–25 (GKCRSGKSA) and Ser-38 contribute to the GTP site. Residues 44–48 (TVIKM) are G2. Residues 65–68 (DTPD) form a G3 region. The tract at residues 134 to 137 (TRKD) is G4. GTP-binding positions include 135 to 137 (RKD) and Asn-170. Residues 169–171 (NNK) are G5. The interval 217-246 (EAASQEGDKPQGPRERQLQSTGPEQNPGTS) is disordered. Basic and acidic residues predominate over residues 222–233 (EGDKPQGPRERQ). Over residues 234–246 (LQSTGPEQNPGTS) the composition is skewed to polar residues. AIG1-type G domains are found at residues 245 to 435 (TSEL…VFRE) and 436 to 644 (KETL…SKLI). 2 coiled-coil regions span residues 400-427 (NYRA…HQNG) and 608-657 (QAQE…EKLL).

Belongs to the TRAFAC class TrmE-Era-EngA-EngB-Septin-like GTPase superfamily. AIG1/Toc34/Toc159-like paraseptin GTPase family. IAN subfamily. Expressed in the spleen, intestine, liver, and colon, as well as in lung, placenta, kidney, muscle, and heart. Extremely low expression, if any, in brain, in thymus, bone marrow, and blood leukocytes. Detected in T-cells.

The protein resides in the endoplasmic reticulum. It is found in the golgi apparatus. It localises to the mitochondrion. Its subcellular location is the cytoplasm. The protein localises to the cytosol. Functionally, exerts an anti-apoptotic effect in the immune system and is involved in responses to infections. In Homo sapiens (Human), this protein is GTPase IMAP family member 8 (GIMAP8).